Reading from the N-terminus, the 198-residue chain is Probable GTP-binding protein EngB (198 aa).

One can recognise an EngB-type G domain in the interval 22-195 (DLPEIALAGR…WKAIHKFTKT (174 aa)). GTP is bound by residues 30 to 37 (GRSNVGKS), 57 to 61 (GKTQT), 75 to 78 (DVPG), 142 to 145 (TKAD), and 174 to 176 (FSS). Mg(2+) contacts are provided by Ser37 and Thr59.

Belongs to the TRAFAC class TrmE-Era-EngA-EngB-Septin-like GTPase superfamily. EngB GTPase family. The cofactor is Mg(2+).

Functionally, necessary for normal cell division and for the maintenance of normal septation. The protein is Probable GTP-binding protein EngB of Bacillus anthracis (strain A0248).